A 198-amino-acid polypeptide reads, in one-letter code: Carnitine operon protein CaiE (198 aa).

The disordered stretch occupies residues 179–198 (VEENRPRLKGTTDVKPKSAQ). Residues 180-198 (EENRPRLKGTTDVKPKSAQ) show a composition bias toward basic and acidic residues.

It belongs to the transferase hexapeptide repeat family.

The protein operates within amine and polyamine metabolism; carnitine metabolism. Functionally, overproduction of CaiE stimulates the activity of CaiB and CaiD. The chain is Carnitine operon protein CaiE from Salmonella choleraesuis (strain SC-B67).